The primary structure comprises 642 residues: Bud site selection protein 5 (642 aa).

An N-terminal Ras-GEF domain is found at 224–339 (EVFRIQLYLN…DIVQLFINKK (116 aa)). Residues 412–640 (SPWSLAKTLT…YQVSIAKVPR (229 aa)) form the Ras-GEF domain.

In terms of assembly, interacts with AXL2, BEM1, GSP1 and in haploid cells with AXL1.

It is found in the bud neck. It localises to the cytoplasm. Its subcellular location is the cell cortex. Functionally, GDP-GTP exchange factor (GEF) for the small GTPase BUD1/RSR1. Regulates the activity of BUD1 together with BUD2 which is a GTPase-activating protein (GAP) of BUD1. Required to produce both the axial and bipolar patterns of bud site selection. Determines the orientation of division axis. Overexpression can suppress mutations in PRP20 which is the GEF for GSP1. May be a cytoplasmic GEF for GSP1. Might also act on the Ras-like protein CDC42. Appears to bind to Ras proteins but not to activate them. The polypeptide is Bud site selection protein 5 (BUD5) (Saccharomyces cerevisiae (strain ATCC 204508 / S288c) (Baker's yeast)).